Reading from the N-terminus, the 548-residue chain is MSLQDESFPTDELFDQLNNLSSSGARNTWFAEHHKPAVFERDTAPFLEICYADPDFDADGDVANKSAKTCVSDPVGRDQEDEDDYDEDVDGDDHKLGCEKAPLGSGRSSKAVSYQDIHSAYTKRRFQHVTSKVGQYIAEIQAQDQKRRNVKFAGFQRVNSMPESLTPTLQQVYVHDGDFKVDKNCQTHSNSDSNYNSNSNNSSSSFDRLLAENESLQQKINSLRVEAKRLQGFNEYVQERLDRKTDDFVKMKCNFETLRTELSECQQKLRRQQDNSQHHFMYHIRSATSAKATQTDFLVDTIPASGNVLVTPHPLGDLTYNSSKGSIELALLSVAPSARVAQNPVQVQRAIHPQSLDFSSVSTEADGSGSGEHRVETSSRALVRRTPAPNNSETSQPSSNDSAIEVEAHEEERPSSRRQWEQQGELISPRQWGQHEGMYYFDKRNNRVIEVMGFNISQGRNQSHDTIHNQSINDSQTRLLVHSMSMSHLEAHDHFRSKRTTLGSRMLRFLGPCVRCRNGDPLNRSNVTYKDGLPAMPEEEFVDQRNQR.

Disordered regions lie at residues 67 to 109, 184 to 206, and 358 to 428; these read AKTC…GRSS, NCQT…SSSF, and FSSV…ELIS. Acidic residues predominate over residues 79–91; the sequence is QEDEDDYDEDVDG. Residues 189 to 205 show a composition bias toward low complexity; that stretch reads SNSDSNYNSNSNNSSSS. Phosphoserine is present on residues Ser362 and Ser368. Polar residues predominate over residues 388–402; the sequence is APNNSETSQPSSNDS. Over residues 406 to 420 the composition is skewed to basic and acidic residues; the sequence is VEAHEEERPSSRRQW. Ser463, Ser471, Ser475, Ser483, Ser485, and Ser487 each carry phosphoserine.

In terms of assembly, may be a homo- or heterodimer.

It localises to the nucleus. Has a role in localizing bicoid mRNA at the anterior margin of the oocyte during oogenesis, and a poorly characterized role in nuclear divisions in early embryogenesis. The polypeptide is Protein swallow (swa) (Drosophila melanogaster (Fruit fly)).